The following is a 436-amino-acid chain: Serine--tRNA ligase (436 aa).

An L-serine-binding site is contributed by 242–244; sequence TAE. 273 to 275 serves as a coordination point for ATP; sequence RSE. Glu-296 contributes to the L-serine binding site. Residue 360-363 participates in ATP binding; the sequence is EISS. Ser-395 is an L-serine binding site.

The protein belongs to the class-II aminoacyl-tRNA synthetase family. Type-1 seryl-tRNA synthetase subfamily. In terms of assembly, homodimer. The tRNA molecule binds across the dimer.

Its subcellular location is the cytoplasm. The catalysed reaction is tRNA(Ser) + L-serine + ATP = L-seryl-tRNA(Ser) + AMP + diphosphate + H(+). It carries out the reaction tRNA(Sec) + L-serine + ATP = L-seryl-tRNA(Sec) + AMP + diphosphate + H(+). It functions in the pathway aminoacyl-tRNA biosynthesis; selenocysteinyl-tRNA(Sec) biosynthesis; L-seryl-tRNA(Sec) from L-serine and tRNA(Sec): step 1/1. In terms of biological role, catalyzes the attachment of serine to tRNA(Ser). Is also able to aminoacylate tRNA(Sec) with serine, to form the misacylated tRNA L-seryl-tRNA(Sec), which will be further converted into selenocysteinyl-tRNA(Sec). This Polynucleobacter necessarius subsp. necessarius (strain STIR1) protein is Serine--tRNA ligase.